A 395-amino-acid polypeptide reads, in one-letter code: MTSILTNIAAMAALQTLRTIGSNMEETQAHVSSGLRVGQAADNAAYWSIATTMRSDNMALSAVQDALGLGAAKVDTAYSGMESAIEVVKEIKKKLVAATEDGVDKAKIQEEIDQLKDQLTSISEAASFSGENWLQADLSGGAVTKSVVGSFVRDASGAVSVKKVDYSLNTNSVLFDTVGNTGILDKVYNVSQASVTLTINTNGVASQHTVAAYSLESLTQAGAEFQGNYALQGGNSYVKVDNVWVRAETAATGATGQELAATTTAAGTITADSWVVDVGNAPAANVSAGQSVAGINIVGMGAAALDALISGVDAALTDMTSAAADLGSIAMRIDLQSDFVNKLSDSIDSGVGRLVDADMNEESTRLKALQTQQQLAIQSLSIANSASENVLTLFR.

Belongs to the bacterial flagellin family.

The protein resides in the secreted. The protein localises to the bacterial flagellum. Its function is as follows. Flagellin is the subunit protein which polymerizes to form the filaments of bacterial flagella. This chain is Flagellin B (flaB), found in Rhizobium meliloti (Ensifer meliloti).